Consider the following 227-residue polypeptide: uncharacterized protein (227 aa).

The next 2 membrane-spanning stretches (helical) occupy residues 113-133 (IMLI…FIVF) and 141-161 (FGIC…NGLI).

The protein localises to the membrane. This is an uncharacterized protein from Dictyostelium discoideum (Social amoeba).